The sequence spans 246 residues: tRNA pseudouridine synthase A (246 aa).

Catalysis depends on Asp-52, which acts as the Nucleophile. Tyr-111 contacts substrate.

This sequence belongs to the tRNA pseudouridine synthase TruA family. Homodimer.

The catalysed reaction is uridine(38/39/40) in tRNA = pseudouridine(38/39/40) in tRNA. Functionally, formation of pseudouridine at positions 38, 39 and 40 in the anticodon stem and loop of transfer RNAs. The polypeptide is tRNA pseudouridine synthase A (Parvibaculum lavamentivorans (strain DS-1 / DSM 13023 / NCIMB 13966)).